The sequence spans 636 residues: MSKLLVIALLLLPLINHGIYLATAWDDQDFFKYCPPSKCSQHGPMIRYPLCLESSNTSSSSSCGCAGRSIWKLACSGQDTILVHPVLGPYSVSAIDYRRSSMKITPLVDPCLVLQQKLIISRSSSSPQVDVINDEKPSFDENFFESSSATIVHCSREFTPAAAHADSIAGPVSCLSNTTHFFYLVNSDEDMSILPLDCKVVPVSDRGGISLPHMLKDQMFYNFTETAKKIPSFAETAVSWDEGDCRECELSGRRCAFSSQRDREFCMPDPHGSHIKVIAATSSVAAFVALLLTVATVLYLSLKTRYNAEIHMKVEMFLKTYGTSKPTRYTFSEVKKMARRFKEKVGQGGFGSVYKGELPNGVPVAVKMLENSTGEGESFINEVATIGLIHHANIVRLLGFCSEGMRRALIYEFMPNESLEKYIFSDDSNIFQNLLVPEKLLDIALGIARGMEYLHQGCNQRILHFDIKPHNILLDYNFNPKISDFGLAKLCARDQSIVTLTAARGTMGYIAPELYSRNFGGVSYKADVYSFGMLVLEMVSGRRNSDPRIGSQDDVYLPEWIYEKVINGEELALTLETTQEEKDKVRQLAMVALWCIQWNPRNRPSMTKVVNMLTGRLQSLQMPPKPFVSSENELMS.

An N-terminal signal peptide occupies residues M1–A24. The Extracellular segment spans residues W25 to K276. Residues N56, N177, and N222 are each glycosylated (N-linked (GlcNAc...) asparagine). The helical transmembrane segment at V277–V297 threads the bilayer. At L298–S636 the chain is on the cytoplasmic side. In terms of domain architecture, Protein kinase spans R339–V628. ATP contacts are provided by residues V345 to V353 and K367. D466 functions as the Proton acceptor in the catalytic mechanism.

This sequence belongs to the protein kinase superfamily. Ser/Thr protein kinase family. In terms of tissue distribution, specifically expressed in the aerial parts of the plant.

Its subcellular location is the cell membrane. The enzyme catalyses L-seryl-[protein] + ATP = O-phospho-L-seryl-[protein] + ADP + H(+). It carries out the reaction L-threonyl-[protein] + ATP = O-phospho-L-threonyl-[protein] + ADP + H(+). This Triticum aestivum (Wheat) protein is Rust resistance kinase Lr10.